The primary structure comprises 179 residues: UPF0227 protein Shew185_2404 (179 aa).

The protein belongs to the UPF0227 family.

The sequence is that of UPF0227 protein Shew185_2404 from Shewanella baltica (strain OS185).